The sequence spans 55 residues: Variant surface glycoprotein ETAT 1.2 (55 aa).

N-linked (GlcNAc...) asparagine glycosylation is present at asparagine 34. A lipid anchor (GPI-anchor amidated asparagine) is attached at asparagine 38. Residues 39 to 55 constitute a propeptide, removed in mature form; that stretch reads NSFAIKTSTLLLAVLLF.

Its subcellular location is the cell membrane. VSG forms a coat on the surface of the parasite. The trypanosome evades the immune response of the host by expressing a series of antigenically distinct VSGs from an estimated 1000 VSG genes. The protein is Variant surface glycoprotein ETAT 1.2 of Trypanosoma brucei rhodesiense.